Consider the following 217-residue polypeptide: KS1 protein (217 aa).

The first 16 residues, 1–16, serve as a signal peptide directing secretion; that stretch reads MKLIIVLVMMLVCVYS. Residues 24–47 are compositionally biased toward basic and acidic residues; it reads PKNHEVPAKKQFAETKVEKKKRSD. 2 disordered regions span residues 24–58 and 72–205; these read PKNH…DDDD and EDDD…LKIK. A run of 2 repeats spans residues 32–81 and 98–147. Positions 32–147 are 2 X 50 AA approximate repeats; sequence KKQFAETKVE…EEDDDCYDED (116 aa). 2 stretches are compositionally biased toward acidic residues: residues 48 to 58 and 72 to 94; these read DGDEEICDDDD and EDDD…DDCQ. The segment covering 98–110 has biased composition (basic residues); sequence KKKKRETKPKLKK. The span at 114-145 shows a compositional bias: acidic residues; the sequence is DEEEEECEEDDEDCEVEVDIEECDEEDDDCYD. A compositionally biased stretch (basic residues) spans 149 to 188; the sequence is KKKKENKLKKESKKKNSKKTVPKNAKKSSKRSTSTKKTSQ.

As to expression, expressed in tentacle-specific epithelial cells (battery cells) as well as in a small fraction of ectodermal epithelial cells in the gastric region subjacent to the tentacles (the tentacle formation region). The later cells are committed to become battery cells.

Functionally, responds to early signals of head formation in hydra. The sequence is that of KS1 protein (KS1) from Hydra vulgaris (Hydra).